A 33-amino-acid polypeptide reads, in one-letter code: Pheromone biosynthesis-activating neuropeptide (33 aa).

The interval 1-33 (LADDMPATMADQEVYRPEPEQIDSRNKYFSPRL) is disordered. Residues 13–26 (EVYRPEPEQIDSRN) are compositionally biased toward basic and acidic residues. The residue at position 33 (Leu33) is a Leucine amide.

The protein belongs to the pyrokinin family.

It localises to the secreted. Its function is as follows. Involved in the control of pheromone production in females. The sequence is that of Pheromone biosynthesis-activating neuropeptide from Lymantria dispar (Gypsy moth).